The primary structure comprises 648 residues: Beta-glucuronidase (648 aa).

The first 22 residues, 1–22 (MSPRRSVCWFVLGQLLCSCAVA), serve as a signal peptide directing secretion. Asn-172 and Asn-416 each carry an N-linked (GlcNAc...) asparagine glycan. Glu-447 (proton donor) is an active-site residue. A glycan (N-linked (GlcNAc...) asparagine) is linked at Asn-627.

The protein belongs to the glycosyl hydrolase 2 family. Homotetramer. In terms of processing, undergoes a post-transcriptional proteolytic cleavage near its C-terminal end, which reduces its size by approximately 3 kDa. The site of this cleavage has as yet not been determined.

It localises to the lysosome. The catalysed reaction is a beta-D-glucuronoside + H2O = D-glucuronate + an alcohol. Its activity is regulated as follows. Inhibited by L-aspartic acid. Plays an important role in the degradation of dermatan and keratan sulfates. The protein is Beta-glucuronidase (Gusb) of Rattus norvegicus (Rat).